The sequence spans 390 residues: MLPLSIKDDEYKPPKFNLVRKVSGWIRSIFSDSTSRNLFCFLCLNLSFAFVELFYGIWSNSLGLISDSFHMFFDCTALLAGLAASVISRWKTNETFSYGYVRAEVLAGFVNGLFLIFTAFFIFSEGIERALDTPEVHHERLLPVSIMGFLVNLIGIFVFQHGGGHGHSHESGHGHSHSLFNGAVSHGHSHSHGGGHGHSHGGGHEHGHSHGGGHEHGHDHSHKHGHGYGSSCHDEPPEENKGSSKQILEGVFLHIVADALGSVGVIISTILMQQYGLMIADPICSMLIALLIFVSVIPLLKQSIGILMQRTPPSLDHVLPQCYQRVQQLQGVYHLQEPHFWTLCTDVYIGTLKLVIGPEADARWILSQTHNIFTQAGVRQLYVQIDLAAM.

Residues methionine 1–asparagine 37 are Cytoplasmic-facing. The chain crosses the membrane as a helical span at residues leucine 38–tryptophan 58. Residues serine 59 to aspartate 67 are Lumenal-facing. A helical transmembrane segment spans residues serine 68–serine 88. Over arginine 89–arginine 102 the chain is Cytoplasmic. A helical membrane pass occupies residues alanine 103 to phenylalanine 123. Residues serine 124–arginine 140 lie on the Lumenal side of the membrane. A helical transmembrane segment spans residues leucine 141–histidine 161. Residues histidine 161–histidine 226 form a his-rich loop region. The Cytoplasmic segment spans residues glycine 162–glycine 250. Residues glycine 166–serine 243 are disordered. Positions glycine 187–glycine 201 are enriched in basic residues. Basic and acidic residues-rich tracts occupy residues glycine 202–histidine 218 and cysteine 232–glycine 242. The chain crosses the membrane as a helical span at residues valine 251–leucine 271. Residues methionine 272–glycine 276 lie on the Lumenal side of the membrane. Residues leucine 277–isoleucine 297 traverse the membrane as a helical segment. Over proline 298–methionine 390 the chain is Cytoplasmic.

Belongs to the cation diffusion facilitator (CDF) transporter (TC 2.A.4) family. SLC30A subfamily. In terms of assembly, homooligomer.

Its subcellular location is the golgi apparatus membrane. It is found in the cytoplasmic vesicle. It localises to the golgi apparatus. The protein resides in the trans-Golgi network. The protein localises to the sarcoplasmic reticulum. Its subcellular location is the mitochondrion. It catalyses the reaction Zn(2+)(in) = Zn(2+)(out). Zinc ion transporter mediating zinc entry from the cytosol into the lumen of organelles along the secretory pathway. By contributing to zinc ion homeostasis within the early secretory pathway, regulates the activation and folding of enzymes like alkaline phosphatases. This chain is Zinc transporter 7-B (slc30a7-b), found in Xenopus laevis (African clawed frog).